Here is a 310-residue protein sequence, read N- to C-terminus: Alpha/beta hydrolase domain-containing protein 17C (310 aa).

Residues S192, D257, and H286 each act as charge relay system in the active site.

This sequence belongs to the AB hydrolase superfamily. ABHD17 family. In terms of processing, palmitoylated on cysteine residues located in a cysteine cluster at the N-terminus which promotes membrane localization.

The protein localises to the recycling endosome membrane. Its subcellular location is the cell projection. The protein resides in the dendritic spine. It localises to the postsynaptic density membrane. It carries out the reaction S-hexadecanoyl-L-cysteinyl-[protein] + H2O = L-cysteinyl-[protein] + hexadecanoate + H(+). Its function is as follows. Hydrolyzes fatty acids from S-acylated cysteine residues in proteins. The polypeptide is Alpha/beta hydrolase domain-containing protein 17C (Xenopus tropicalis (Western clawed frog)).